The primary structure comprises 278 residues: HTH-type transcriptional activator RhaS (278 aa).

The 99-residue stretch at 174-272 (NHLIAWLEDH…GWSPREIRQG (99 aa)) folds into the HTH araC/xylS-type domain. DNA-binding regions (H-T-H motif) lie at residues 191–212 (EAIA…KQHT) and 239–262 (VTHI…RREF).

As to quaternary structure, binds DNA as a dimer.

Its subcellular location is the cytoplasm. Activates expression of the rhaBAD and rhaT operons. The polypeptide is HTH-type transcriptional activator RhaS (Escherichia fergusonii (strain ATCC 35469 / DSM 13698 / CCUG 18766 / IAM 14443 / JCM 21226 / LMG 7866 / NBRC 102419 / NCTC 12128 / CDC 0568-73)).